The sequence spans 286 residues: Phosphoribosylaminoimidazole-succinocarboxamide synthase (286 aa).

This sequence belongs to the SAICAR synthetase family.

It carries out the reaction 5-amino-1-(5-phospho-D-ribosyl)imidazole-4-carboxylate + L-aspartate + ATP = (2S)-2-[5-amino-1-(5-phospho-beta-D-ribosyl)imidazole-4-carboxamido]succinate + ADP + phosphate + 2 H(+). Its pathway is purine metabolism; IMP biosynthesis via de novo pathway; 5-amino-1-(5-phospho-D-ribosyl)imidazole-4-carboxamide from 5-amino-1-(5-phospho-D-ribosyl)imidazole-4-carboxylate: step 1/2. This is Phosphoribosylaminoimidazole-succinocarboxamide synthase from Mannheimia succiniciproducens (strain KCTC 0769BP / MBEL55E).